The primary structure comprises 220 residues: 6-phosphogluconolactonase (220 aa).

Belongs to the glucosamine/galactosamine-6-phosphate isomerase family. 6-phosphogluconolactonase subfamily.

It carries out the reaction 6-phospho-D-glucono-1,5-lactone + H2O = 6-phospho-D-gluconate + H(+). Its pathway is carbohydrate degradation; pentose phosphate pathway; D-ribulose 5-phosphate from D-glucose 6-phosphate (oxidative stage): step 2/3. In terms of biological role, hydrolysis of 6-phosphogluconolactone to 6-phosphogluconate. The protein is 6-phosphogluconolactonase (pgl) of Thermotoga maritima (strain ATCC 43589 / DSM 3109 / JCM 10099 / NBRC 100826 / MSB8).